The following is a 256-amino-acid chain: Ubiquinone/menaquinone biosynthesis C-methyltransferase UbiE (256 aa).

Positions 1-12 are enriched in basic and acidic residues; that stretch reads MNDQRKGDHAEP. Residues 1–23 form a disordered region; the sequence is MNDQRKGDHAEPTTHFGYQDVPE. S-adenosyl-L-methionine-binding positions include threonine 79, aspartate 100, and 128 to 129; that span reads DA.

The protein belongs to the class I-like SAM-binding methyltransferase superfamily. MenG/UbiE family.

The catalysed reaction is a 2-demethylmenaquinol + S-adenosyl-L-methionine = a menaquinol + S-adenosyl-L-homocysteine + H(+). It carries out the reaction a 2-methoxy-6-(all-trans-polyprenyl)benzene-1,4-diol + S-adenosyl-L-methionine = a 5-methoxy-2-methyl-3-(all-trans-polyprenyl)benzene-1,4-diol + S-adenosyl-L-homocysteine + H(+). It functions in the pathway quinol/quinone metabolism; menaquinone biosynthesis; menaquinol from 1,4-dihydroxy-2-naphthoate: step 2/2. It participates in cofactor biosynthesis; ubiquinone biosynthesis. Functionally, methyltransferase required for the conversion of demethylmenaquinol (DMKH2) to menaquinol (MKH2) and the conversion of 2-polyprenyl-6-methoxy-1,4-benzoquinol (DDMQH2) to 2-polyprenyl-3-methyl-6-methoxy-1,4-benzoquinol (DMQH2). This Pseudomonas putida (strain GB-1) protein is Ubiquinone/menaquinone biosynthesis C-methyltransferase UbiE.